Consider the following 166-residue polypeptide: Protein SprT (166 aa).

In terms of domain architecture, SprT-like spans 20 to 164 (EHLANANRKL…CVRCGDLLVA (145 aa)). His-78 is a binding site for Zn(2+). The active site involves Glu-79. His-82 is a binding site for Zn(2+).

This sequence belongs to the SprT family. The cofactor is Zn(2+).

The protein resides in the cytoplasm. The protein is Protein SprT of Klebsiella pneumoniae subsp. pneumoniae (strain ATCC 700721 / MGH 78578).